Consider the following 289-residue polypeptide: Ribosomal protein L11 methyltransferase (289 aa).

Thr142, Gly163, Asp185, and Asn226 together coordinate S-adenosyl-L-methionine.

The protein belongs to the methyltransferase superfamily. PrmA family.

The protein resides in the cytoplasm. The enzyme catalyses L-lysyl-[protein] + 3 S-adenosyl-L-methionine = N(6),N(6),N(6)-trimethyl-L-lysyl-[protein] + 3 S-adenosyl-L-homocysteine + 3 H(+). Its function is as follows. Methylates ribosomal protein L11. The sequence is that of Ribosomal protein L11 methyltransferase from Legionella pneumophila (strain Corby).